A 230-amino-acid polypeptide reads, in one-letter code: NADH dehydrogenase [ubiquinone] iron-sulfur protein 8, mitochondrial (230 aa).

The N-terminal 42 residues, 1-42, are a transit peptide targeting the mitochondrion; the sequence is MAAILARKSLSALRSRQLVLAGQAWQQGANTSNGTLLGTRTF. 4Fe-4S ferredoxin-type domains are found at residues 122–151 and 161–190; these read RRYP…IEAE and TRYD…EGPN. [4Fe-4S] cluster contacts are provided by Cys-131, Cys-134, Cys-137, Cys-141, Cys-170, Cys-173, Cys-176, and Cys-180.

The protein belongs to the complex I 23 kDa subunit family. As to quaternary structure, complex I is composed of about 45 different subunits. This is a component of the iron-sulfur (IP) fragment of the enzyme. The cofactor is [4Fe-4S] cluster.

It is found in the mitochondrion. It carries out the reaction a ubiquinone + NADH + 5 H(+)(in) = a ubiquinol + NAD(+) + 4 H(+)(out). Core subunit of the mitochondrial membrane respiratory chain NADH dehydrogenase (Complex I) that is believed to belong to the minimal assembly required for catalysis. Complex I functions in the transfer of electrons from NADH to the respiratory chain. The immediate electron acceptor for the enzyme is believed to be ubiquinone. May donate electrons to ubiquinone. This is NADH dehydrogenase [ubiquinone] iron-sulfur protein 8, mitochondrial from Nicotiana tabacum (Common tobacco).